A 434-amino-acid polypeptide reads, in one-letter code: Trigger factor (434 aa).

A PPIase FKBP-type domain is found at 161–246 (GKRVSIDFVG…VNKVEARELP (86 aa)).

This sequence belongs to the FKBP-type PPIase family. Tig subfamily.

The protein resides in the cytoplasm. The catalysed reaction is [protein]-peptidylproline (omega=180) = [protein]-peptidylproline (omega=0). Functionally, involved in protein export. Acts as a chaperone by maintaining the newly synthesized protein in an open conformation. Functions as a peptidyl-prolyl cis-trans isomerase. In Vibrio parahaemolyticus serotype O3:K6 (strain RIMD 2210633), this protein is Trigger factor.